The chain runs to 596 residues: Linalool synthase TPS3, chloroplastic (596 aa).

The N-terminal 39 residues, 1 to 39, are a transit peptide targeting the chloroplast; the sequence is MISSLNPLFTTHRSGVIAQQFFASSAAASINSVSSLKIA. Positions 308, 345, 349, 486, and 489 each coordinate (2E)-geranyl diphosphate. Mg(2+)-binding residues include D345 and D349. Residues 345–349 carry the DDXXD motif motif; that stretch reads DDIYD. Mg(2+) contacts are provided by N489, T493, and S497.

This sequence belongs to the terpene synthase family. Tpsb subfamily. Monomer. Mg(2+) is required as a cofactor. Requires Mn(2+) as cofactor. In terms of tissue distribution, expressed in flowers and fruits.

The protein localises to the plastid. Its subcellular location is the chloroplast. It carries out the reaction (2E)-geranyl diphosphate = beta-myrcene + diphosphate. It catalyses the reaction (2E)-geranyl diphosphate + H2O = linalool + diphosphate. The enzyme catalyses (2E)-geranyl diphosphate = (Z)-beta-ocimene + diphosphate. The catalysed reaction is (2E)-geranyl diphosphate = (E)-beta-ocimene + diphosphate. It functions in the pathway secondary metabolite biosynthesis; terpenoid biosynthesis. Functionally, monoterpene synthase (mono-TPS) involved in the biosynthesis of monoterpenes natural products, constituent of coffee beverage aroma. Catalyzes the conversion of (2E)-geranyl diphosphate (GPP) into linalool and beta-myrcene, and, as minor products, cis-ocimene and trans-ocimene. Not able to use geranylgeranyl pyrophosphate (GGPP) and farnesyl pyrophosphate (FPP) as substrates. In Coffea arabica (Arabian coffee), this protein is Linalool synthase TPS3, chloroplastic.